Here is a 176-residue protein sequence, read N- to C-terminus: Small ribosomal subunit protein uS5 (176 aa).

The region spanning 15–78 (FEERIVEIRR…SAARRNVFEV (64 aa)) is the S5 DRBM domain.

It belongs to the universal ribosomal protein uS5 family. Part of the 30S ribosomal subunit. Contacts proteins S4 and S8.

Functionally, with S4 and S12 plays an important role in translational accuracy. Its function is as follows. Located at the back of the 30S subunit body where it stabilizes the conformation of the head with respect to the body. The chain is Small ribosomal subunit protein uS5 from Thermosipho africanus (strain TCF52B).